We begin with the raw amino-acid sequence, 85 residues long: Coiled-coil-helix-coiled-coil-helix domain-containing protein 7 (85 aa).

Residues I13–M55 form the CHCH domain. Short sequence motifs (cx9C motif) lie at residues C16 to C26 and C37 to C47. 2 disulfides stabilise this stretch: C16–C47 and C26–C37.

Belongs to the CHCHD7 family. Monomer.

The protein resides in the mitochondrion intermembrane space. The sequence is that of Coiled-coil-helix-coiled-coil-helix domain-containing protein 7 (CHCHD7) from Macaca fascicularis (Crab-eating macaque).